The following is a 356-amino-acid chain: Neurogenic differentiation factor 1 (356 aa).

Residues M1–A94 form a disordered region. The span at E58 to D78 shows a compositional bias: acidic residues. The span at P81–K93 shows a compositional bias: basic residues. The Nuclear localization signal motif lies at K87–K93. Positions L101–L153 constitute a bHLH domain. 4 positions are modified to phosphoserine: S162, S259, S266, and S274. S335 is subject to Phosphoserine; by CaMK2.

Efficient DNA-binding requires dimerization with another bHLH protein. Heterodimer with TCF3/E47; the heterodimer is inhibited in presence of ID2, but not NR0B2, to E-box element. Interacts with EP300; the interaction is inhibited by NR0B2. Interacts with RREB1. Interacts with ATOH8. In terms of processing, phosphorylated. In islet cells, phosphorylated on Ser-274 upon glucose stimulation; which may be required for nuclear localization. In activated neurons, phosphorylated on Ser-335; which promotes dendritic growth. Phosphorylated by MAPK1; phosphorylation regulates heterodimerization and DNA-binding activities. Phosphorylation on Ser-266 and Ser-274 increases transactivation on the insulin promoter in glucose-stimulated insulinoma cells.

It localises to the cytoplasm. The protein localises to the nucleus. Acts as a transcriptional activator: mediates transcriptional activation by binding to E box-containing promoter consensus core sequences 5'-CANNTG-3'. Associates with the p300/CBP transcription coactivator complex to stimulate transcription of the secretin gene as well as the gene encoding the cyclin-dependent kinase inhibitor CDKN1A. Contributes to the regulation of several cell differentiation pathways, like those that promote the formation of early retinal ganglion cells, inner ear sensory neurons, granule cells forming either the cerebellum or the dentate gyrus cell layer of the hippocampus, endocrine islet cells of the pancreas and enteroendocrine cells of the small intestine. Together with PAX6 or SIX3, is required for the regulation of amacrine cell fate specification. Also required for dendrite morphogenesis and maintenance in the cerebellar cortex. Associates with chromatin to enhancer regulatory elements in genes encoding key transcriptional regulators of neurogenesis. This Homo sapiens (Human) protein is Neurogenic differentiation factor 1 (NEUROD1).